The primary structure comprises 867 residues: Armadillo repeat-containing protein 2 (867 aa).

Disordered regions lie at residues 1–115 and 214–252; these read MLSP…CFSF and TSLP…AVPK. Polar residues-rich tracts occupy residues 18–28, 40–50, and 60–69; these read PSVSKQKTSAE, VRTQRPFTPQE, and SSRTSENRPP. Composition is skewed to low complexity over residues 70 to 81 and 234 to 243; these read SSFSLHASSFES and SSCPSSSDLS. ARM repeat units lie at residues 262–301, 304–344, 363–403, 408–449, 462–503, 506–547, 551–589, 591–616, 619–662, 664–705, 707–746, and 748–790; these read IEVD…HALE, NMLG…ALKV, EKND…SIKF, LGFL…HLLV, SLVR…KLTS, DCCT…NLTA, QARE…QRGE, HRAQ…NIAI, GVGP…NLSY, QVKN…NLSQ, HDVC…NLTV, and KDKR…NFSE.

Expressed at higher level in testis.

In terms of biological role, required for sperm flagellum axoneme organization and function. Involved in axonemal central pair complex assembly and/or stability. The polypeptide is Armadillo repeat-containing protein 2 (Homo sapiens (Human)).